The primary structure comprises 192 residues: Phosphoheptose isomerase (192 aa).

Residues 37–192 (LADSFKAGGK…IQLIEKEMVK (156 aa)) enclose the SIS domain. 52–54 (NGG) lines the substrate pocket. Zn(2+) contacts are provided by His61 and Glu65. Residues Glu65, 93–94 (ND), 119–121 (STS), Ser124, and Gln172 contribute to the substrate site. Zn(2+)-binding residues include Gln172 and His180.

Belongs to the SIS family. GmhA subfamily. In terms of assembly, homotetramer. Zn(2+) is required as a cofactor.

It localises to the cytoplasm. The enzyme catalyses 2 D-sedoheptulose 7-phosphate = D-glycero-alpha-D-manno-heptose 7-phosphate + D-glycero-beta-D-manno-heptose 7-phosphate. It functions in the pathway carbohydrate biosynthesis; D-glycero-D-manno-heptose 7-phosphate biosynthesis; D-glycero-alpha-D-manno-heptose 7-phosphate and D-glycero-beta-D-manno-heptose 7-phosphate from sedoheptulose 7-phosphate: step 1/1. In terms of biological role, catalyzes the isomerization of sedoheptulose 7-phosphate in D-glycero-D-manno-heptose 7-phosphate. In Escherichia coli O139:H28 (strain E24377A / ETEC), this protein is Phosphoheptose isomerase.